The sequence spans 280 residues: Shikimate dehydrogenase (NADP(+)) (280 aa).

Shikimate is bound by residues 15–17 (SMS) and Thr-62. Lys-66 (proton acceptor) is an active-site residue. Residue Glu-78 coordinates NADP(+). 2 residues coordinate shikimate: Asn-87 and Asp-102. Residues 127–131 (GAGGA), 151–156 (NRTLEK), and Ile-219 contribute to the NADP(+) site. Tyr-221 provides a ligand contact to shikimate. Gly-242 contributes to the NADP(+) binding site.

Belongs to the shikimate dehydrogenase family. In terms of assembly, homodimer.

It carries out the reaction shikimate + NADP(+) = 3-dehydroshikimate + NADPH + H(+). It participates in metabolic intermediate biosynthesis; chorismate biosynthesis; chorismate from D-erythrose 4-phosphate and phosphoenolpyruvate: step 4/7. Functionally, involved in the biosynthesis of the chorismate, which leads to the biosynthesis of aromatic amino acids. Catalyzes the reversible NADPH linked reduction of 3-dehydroshikimate (DHSA) to yield shikimate (SA). This is Shikimate dehydrogenase (NADP(+)) from Bacillus subtilis (strain 168).